Reading from the N-terminus, the 67-residue chain is Conotoxin AbVIO (67 aa).

Positions 1 to 17 are cleaved as a signal peptide; the sequence is VIIIAVLFLTACQLIAT. The propeptide occupies 18-40; the sequence is ASYARSERKHPDLRLSSRNSKLS. Cystine bridges form between Cys-43–Cys-57, Cys-50–Cys-61, and Cys-56–Cys-66.

This sequence belongs to the conotoxin O1 superfamily. As to expression, expressed by the venom duct.

The protein resides in the secreted. The polypeptide is Conotoxin AbVIO (Conus abbreviatus (Abbreviated cone)).